The chain runs to 182 residues: Large ribosomal subunit protein uL6 (182 aa).

It belongs to the universal ribosomal protein uL6 family. In terms of assembly, part of the 50S ribosomal subunit.

In terms of biological role, this protein binds to the 23S rRNA, and is important in its secondary structure. It is located near the subunit interface in the base of the L7/L12 stalk, and near the tRNA binding site of the peptidyltransferase center. The protein is Large ribosomal subunit protein uL6 of Trichormus variabilis (strain ATCC 29413 / PCC 7937) (Anabaena variabilis).